Here is a 267-residue protein sequence, read N- to C-terminus: Small ribosomal subunit protein uS3 (267 aa).

The KH type-2 domain occupies 39 to 114 (IRKYLETNLK…RVNINIVEIR (76 aa)). The span at 229–248 (ANNRGRGNNRGRGNSRQNGG) shows a compositional bias: low complexity. The interval 229–267 (ANNRGRGNNRGRGNSRQNGGRSRRPRQGQASTQGRGGNN) is disordered.

Belongs to the universal ribosomal protein uS3 family. Part of the 30S ribosomal subunit. Forms a tight complex with proteins S10 and S14.

Its function is as follows. Binds the lower part of the 30S subunit head. Binds mRNA in the 70S ribosome, positioning it for translation. In Oenococcus oeni (strain ATCC BAA-331 / PSU-1), this protein is Small ribosomal subunit protein uS3.